The following is a 462-amino-acid chain: ATP synthase subunit beta (462 aa).

151 to 158 (GGAGVGKT) provides a ligand contact to ATP.

It belongs to the ATPase alpha/beta chains family. F-type ATPases have 2 components, CF(1) - the catalytic core - and CF(0) - the membrane proton channel. CF(1) has five subunits: alpha(3), beta(3), gamma(1), delta(1), epsilon(1). CF(0) has three main subunits: a(1), b(2) and c(9-12). The alpha and beta chains form an alternating ring which encloses part of the gamma chain. CF(1) is attached to CF(0) by a central stalk formed by the gamma and epsilon chains, while a peripheral stalk is formed by the delta and b chains.

Its subcellular location is the cell inner membrane. It carries out the reaction ATP + H2O + 4 H(+)(in) = ADP + phosphate + 5 H(+)(out). Produces ATP from ADP in the presence of a proton gradient across the membrane. The catalytic sites are hosted primarily by the beta subunits. The protein is ATP synthase subunit beta of Chlorobaculum parvum (strain DSM 263 / NCIMB 8327) (Chlorobium vibrioforme subsp. thiosulfatophilum).